The sequence spans 211 residues: Urease accessory protein UreG (211 aa).

Residue 8–15 (GPVGSGKT) coordinates GTP.

The protein belongs to the SIMIBI class G3E GTPase family. UreG subfamily. In terms of assembly, homodimer. UreD, UreF and UreG form a complex that acts as a GTP-hydrolysis-dependent molecular chaperone, activating the urease apoprotein by helping to assemble the nickel containing metallocenter of UreC. The UreE protein probably delivers the nickel.

It localises to the cytoplasm. Its function is as follows. Facilitates the functional incorporation of the urease nickel metallocenter. This process requires GTP hydrolysis, probably effectuated by UreG. The chain is Urease accessory protein UreG from Metallosphaera sedula (strain ATCC 51363 / DSM 5348 / JCM 9185 / NBRC 15509 / TH2).